Consider the following 403-residue polypeptide: Myeloid cell surface antigen CD33 (403 aa).

The signal sequence occupies residues methionine 1–alanine 16. Residues glutamine 17 to valine 120 form the Ig-like V-type domain. Over aspartate 18–glutamate 240 the chain is Extracellular. 3 cysteine pairs are disulfide-bonded: cysteine 36–cysteine 169, cysteine 41–cysteine 100, and cysteine 163–cysteine 212. Asparagine 110 carries an N-linked (GlcNAc...) asparagine glycan. Arginine 118 is a binding site for N-acetylneuraminate. The 84-residue stretch at proline 145 to glutamine 228 folds into the Ig-like C2-type domain. Asparagine 160 carries N-linked (GlcNAc...) asparagine glycosylation. A glycan (N-linked (GlcNAc...) asparagine) is linked at asparagine 230. A helical membrane pass occupies residues leucine 241–phenylalanine 267. Over cysteine 268–serine 403 the chain is Cytoplasmic.

Belongs to the immunoglobulin superfamily. SIGLEC (sialic acid binding Ig-like lectin) family. Homodimer; disulfide-linked. Interacts with PTPN6/SHP-1 and PTPN11/SHP-2 upon phosphorylation. Interacts with C1QA (via C-terminus); this interaction activates CD33 inhibitory motifs. Post-translationally, glycosylated. Phosphorylation is involved in binding to PTPN6 and PTPN11. In terms of tissue distribution, expressed on myeloid precursors in the bone marrow. In the peripheral blood, mostly expressed on granulocytes.

Its subcellular location is the cell membrane. In terms of biological role, sialic-acid-binding immunoglobulin-like lectin (Siglec) that plays a role in mediating cell-cell interactions and in maintaining immune cells in a resting state. Preferentially binds sialic acid to the short O-linked glycans of certain mucins. The protein is Myeloid cell surface antigen CD33 (Cd33) of Mus musculus (Mouse).